The following is a 300-amino-acid chain: uncharacterized protein (300 aa).

A coiled-coil region spans residues L67–S179. Low complexity predominate over residues S203–Q285. Residues S203–L300 are disordered.

This is an uncharacterized protein from Staphylococcus epidermidis (strain ATCC 12228 / FDA PCI 1200).